The following is a 188-amino-acid chain: Putative manganese efflux pump MntP (188 aa).

Transmembrane regions (helical) follow at residues 3–23 (FYAL…VALA), 35–55 (IAAT…AGWV), 63–83 (FISE…GLKM), 107–127 (VLTA…LAFM), 131–151 (IAFA…VGLA), and 167–187 (AGGL…LGLI).

This sequence belongs to the MntP (TC 9.B.29) family.

It is found in the cell inner membrane. Probably functions as a manganese efflux pump. This chain is Putative manganese efflux pump MntP, found in Neisseria meningitidis serogroup A / serotype 4A (strain DSM 15465 / Z2491).